The following is a 494-amino-acid chain: ATP-dependent RNA helicase HAS1 (494 aa).

Residues methionine 1 to glutamate 23 are disordered. Positions histidine 29–alanine 57 match the Q motif motif. One can recognise a Helicase ATP-binding domain in the interval isoleucine 60–phenylalanine 236. Residue alanine 73–threonine 80 participates in ATP binding. The DEAD box signature appears at aspartate 183–aspartate 186. The region spanning glycine 250–isoleucine 420 is the Helicase C-terminal domain. A Bipartite nuclear localization signal motif is present at residues lysine 262–lysine 278.

Belongs to the DEAD box helicase family. DDX18/HAS1 subfamily. Associates in the nucleolus with the 60S and pre-60S ribosomal subunits.

It localises to the nucleus. The protein localises to the nucleolus. It catalyses the reaction ATP + H2O = ADP + phosphate + H(+). Its function is as follows. ATP-dependent RNA helicase involved in 40S ribosomal subunit biogenesis. Required for the processing and cleavage of 35S pre-rRNA at sites A0, A1, and A2, leading to mature 18S rRNA. The sequence is that of ATP-dependent RNA helicase HAS1 (HAS1) from Candida glabrata (strain ATCC 2001 / BCRC 20586 / JCM 3761 / NBRC 0622 / NRRL Y-65 / CBS 138) (Yeast).